A 609-amino-acid polypeptide reads, in one-letter code: Glutamine--fructose-6-phosphate aminotransferase [isomerizing] (609 aa).

The active-site Nucleophile; for GATase activity is the Cys-2. In terms of domain architecture, Glutamine amidotransferase type-2 spans 2–217 (CGIVGAIAGR…EGDTAELRRD (216 aa)). SIS domains follow at residues 284 to 425 (TADA…LQGR) and 458 to 599 (WAER…VDKP). The active-site For Fru-6P isomerization activity is the Lys-604.

Homodimer.

It localises to the cytoplasm. It catalyses the reaction D-fructose 6-phosphate + L-glutamine = D-glucosamine 6-phosphate + L-glutamate. Its function is as follows. Catalyzes the first step in hexosamine metabolism, converting fructose-6P into glucosamine-6P using glutamine as a nitrogen source. This Xanthomonas campestris pv. campestris (strain ATCC 33913 / DSM 3586 / NCPPB 528 / LMG 568 / P 25) protein is Glutamine--fructose-6-phosphate aminotransferase [isomerizing].